We begin with the raw amino-acid sequence, 227 residues long: UPF0173 metal-dependent hydrolase Tlet_1100 (227 aa).

This sequence belongs to the UPF0173 family.

The polypeptide is UPF0173 metal-dependent hydrolase Tlet_1100 (Pseudothermotoga lettingae (strain ATCC BAA-301 / DSM 14385 / NBRC 107922 / TMO) (Thermotoga lettingae)).